The primary structure comprises 441 residues: FAM10 family protein At4g22670 (441 aa).

A disordered region spans residues 41 to 114 (KIPTGVHEED…PQKMGDSSVE (74 aa)). The span at 46–55 (VHEEDKDTKP) shows a compositional bias: basic and acidic residues. Composition is skewed to acidic residues over residues 61 to 71 (EESDDDMDETE) and 78 to 102 (EEEE…EPDN). Residues S63 and S89 each carry the phosphoserine modification. 3 TPR repeats span residues 121 to 156 (EAAQ…NPTS), 158 to 190 (IMYG…NPDS), and 191 to 224 (AKGY…DYDE). Residues 236–285 (NAHKLEEHRRKYDRLRKEREDKKAERDRLRRRAEAQAAYDKAKKEEQSSS) adopt a coiled-coil conformation. Basic and acidic residues predominate over residues 244 to 282 (RRKYDRLRKEREDKKAERDRLRRRAEAQAAYDKAKKEEQ). The disordered stretch occupies residues 244–314 (RRKYDRLRKE…MPGGFPGGMG (71 aa)). Residues 289-314 (SGGGFPGGMPGGFPGGMPGGFPGGMG) are compositionally biased toward gly residues. One can recognise an STI1 domain in the interval 391-430 (DPELMTAFSDPEVMAALQDVMKNPANLAKHQANPKVAPVI).

It belongs to the FAM10 family.

In Arabidopsis thaliana (Mouse-ear cress), this protein is FAM10 family protein At4g22670.